Consider the following 524-residue polypeptide: Na(+)/H(+) antiporter NhaG (524 aa).

The next 11 membrane-spanning stretches (helical) occupy residues 6–26 (LHHI…ITAI), 33–53 (PYPI…IPLF), 59–79 (FITE…PALL), 98–118 (VLAL…SSMW), 126–146 (AAFV…LSIF), 169–189 (LAVV…DLGI), 193–213 (GLGL…GGVL), 242–262 (FLLA…AALI), 283–303 (FWDV…GLEI), 312–332 (WGLA…AVYI), and 374–394 (DILV…GLTI).

The protein belongs to the monovalent cation:proton antiporter 1 (CPA1) transporter (TC 2.A.36) family.

The protein resides in the cell membrane. Na(+)/H(+) antiporter that extrudes sodium in exchange for external protons. Can also transport lithium. This is Na(+)/H(+) antiporter NhaG (nhaG) from Bacillus atrophaeus.